The following is a 200-amino-acid chain: Phospholipase A2 inhibitor gamma subunit B (200 aa).

The first 19 residues, 1 to 19, serve as a signal peptide directing secretion; that stretch reads MKFLLFCCLFGTFLATGMC. 8 disulfide bridges follow: Cys22-Cys46, Cys25-Cys32, Cys39-Cys67, Cys73-Cys94, Cys95-Cys100, Cys120-Cys145, Cys138-Cys165, and Cys171-Cys191. N-linked (GlcNAc...) asparagine glycosylation occurs at Asn31.

This sequence belongs to the CNF-like-inhibitor family. As to quaternary structure, heterodimer of subunit A and subunit B. Post-translationally, N-glycosylated. Expressed by the liver. Not expressed in esophagus, stomach, pancreas, spleen, gall bladder, small intestine, rectum, kidney, trachea, lung, testis and body fat.

It is found in the secreted. Functionally, inhibits the enzymatic activity of phospholipase A2 (PA2). The protein is Phospholipase A2 inhibitor gamma subunit B of Elaphe quadrivirgata (Japanese four-lined ratsnake).